Here is an 85-residue protein sequence, read N- to C-terminus: Large ribosomal subunit protein bL27 (85 aa).

The segment at Met-1–Leu-21 is disordered.

The protein belongs to the bacterial ribosomal protein bL27 family.

This is Large ribosomal subunit protein bL27 from Wolinella succinogenes (strain ATCC 29543 / DSM 1740 / CCUG 13145 / JCM 31913 / LMG 7466 / NCTC 11488 / FDC 602W) (Vibrio succinogenes).